Here is a 324-residue protein sequence, read N- to C-terminus: NADH-ubiquinone oxidoreductase chain 1 (324 aa).

A run of 8 helical transmembrane segments spans residues 10–30, 76–96, 107–127, 143–163, 178–198, 229–249, 260–280, and 300–320; these read MIMT…LTLV, FLFI…WIPL, LGLL…LWSG, VAQT…TIML, PIYL…STLA, LFFL…ITLF, ELFS…FLWV, and FLPL…SYAG.

It belongs to the complex I subunit 1 family.

The protein resides in the mitochondrion inner membrane. The catalysed reaction is a ubiquinone + NADH + 5 H(+)(in) = a ubiquinol + NAD(+) + 4 H(+)(out). Functionally, core subunit of the mitochondrial membrane respiratory chain NADH dehydrogenase (Complex I) that is believed to belong to the minimal assembly required for catalysis. Complex I functions in the transfer of electrons from NADH to the respiratory chain. The immediate electron acceptor for the enzyme is believed to be ubiquinone. The polypeptide is NADH-ubiquinone oxidoreductase chain 1 (MT-ND1) (Excalfactoria chinensis (Blue-breasted quail)).